A 169-amino-acid polypeptide reads, in one-letter code: Disulfide bond formation protein B (169 aa).

At 1–14 (MNNLTLSLHRERRL) the chain is on the cytoplasmic side. The chain crosses the membrane as a helical span at residues 15–31 (LVLLGLVCLALLAGALY). The Periplasmic portion of the chain corresponds to 32-49 (LQYVKNEDPCPLCIIQRY). Cys41 and Cys44 are joined by a disulfide. Residues 50-64 (FFVLIAVFAFIGAGM) traverse the membrane as a helical segment. At 65–71 (ASGAGIA) the chain is on the cytoplasmic side. A helical transmembrane segment spans residues 72–89 (VIEALIVLSAAAGVGTAA). Residues 90–144 (RHLYVQLNPGFSCGFDALQPVVDSLPPAHWLPGVFKVAGLCETVYPPIFGILLPG) lie on the Periplasmic side of the membrane. A disulfide bond links Cys102 and Cys130. A helical membrane pass occupies residues 145 to 163 (WALIAFALIVVPVAASLLR). Topologically, residues 164–169 (HRGRLR) are cytoplasmic.

It belongs to the DsbB family.

It localises to the cell inner membrane. Its function is as follows. Required for disulfide bond formation in some periplasmic proteins. Acts by oxidizing the DsbA protein. The chain is Disulfide bond formation protein B from Burkholderia thailandensis (strain ATCC 700388 / DSM 13276 / CCUG 48851 / CIP 106301 / E264).